The sequence spans 449 residues: MDADLKNLWDKTLDIIKSELSEVSFNTWIKSCEPLSISSNTLKISVPNSFTQDILDKRYKDLVANSIKAVCSKLYTIEFIIMSEIYEKEEIKSSSNQKSKAIVVNDEMSSTLNPKYTFNSFVIGNSNRFAHAASLAVAESPAKAYNPLFIYGGVGLGKTHLMHAIGHYILDGNPNAKVVYVSSEKFTNELINAIKDDKNEEFRNKYRNVDILLIDDIQFIAGKERTQEEFFHTFNALHDANKQIILSSDRPPKEIPTLEDRLRSRFEWGLIADIQVPDFETRMAILKKKADVENLNVANEVMGYIATKIKSNIRELEGALIRIIAYSSLTNREVTVDLATEALKDIISKKQGKHVTIDLIQDVVSSYFNLRVEDLKSQRRTRNVAYPRQIAMYLSRKLTDMSLPKIGEEFGGRDHTTVIHAYEKISENLKTDDSLQSTVNDITKKLTQN.

A domain I, interacts with DnaA modulators region spans residues 1-73; sequence MDADLKNLWD…ANSIKAVCSK (73 aa). Residues 73 to 110 form a domain II region; that stretch reads KLYTIEFIIMSEIYEKEEIKSSSNQKSKAIVVNDEMSS. Residues 111–327 form a domain III, AAA+ region region; sequence TLNPKYTFNS…GALIRIIAYS (217 aa). Gly155, Gly157, Lys158, and Thr159 together coordinate ATP. Positions 328 to 449 are domain IV, binds dsDNA; it reads SLTNREVTVD…NDITKKLTQN (122 aa).

The protein belongs to the DnaA family. Oligomerizes as a right-handed, spiral filament on DNA at oriC.

The protein resides in the cytoplasm. Functionally, plays an essential role in the initiation and regulation of chromosomal replication. ATP-DnaA binds to the origin of replication (oriC) to initiate formation of the DNA replication initiation complex once per cell cycle. Binds the DnaA box (a 9 base pair repeat at the origin) and separates the double-stranded (ds)DNA. Forms a right-handed helical filament on oriC DNA; dsDNA binds to the exterior of the filament while single-stranded (ss)DNA is stabiized in the filament's interior. The ATP-DnaA-oriC complex binds and stabilizes one strand of the AT-rich DNA unwinding element (DUE), permitting loading of DNA polymerase. After initiation quickly degrades to an ADP-DnaA complex that is not apt for DNA replication. Binds acidic phospholipids. The polypeptide is Chromosomal replication initiator protein DnaA (Clostridium beijerinckii (strain ATCC 51743 / NCIMB 8052) (Clostridium acetobutylicum)).